The following is a 540-amino-acid chain: NXPE family member 1 (540 aa).

An N-terminal signal peptide occupies residues 1–22 (MLHKYLKLICLLAAICVLCIIS). N-linked (GlcNAc...) asparagine glycosylation is found at N24, N42, N87, N155, N205, and N291.

This sequence belongs to the NXPE family. As to expression, intestine, and to a lesser extent in kidney.

Its subcellular location is the secreted. The protein is NXPE family member 1 (NXPE1) of Oryctolagus cuniculus (Rabbit).